The chain runs to 267 residues: Tryptophan 2,3-dioxygenase (267 aa).

Substrate contacts are provided by residues 44–48 (FITIH) and Arg-114. A heme-binding site is contributed by His-225. Substrate is bound at residue Thr-239.

The protein belongs to the tryptophan 2,3-dioxygenase family. Homotetramer. Heme serves as cofactor.

It carries out the reaction L-tryptophan + O2 = N-formyl-L-kynurenine. It functions in the pathway amino-acid degradation; L-tryptophan degradation via kynurenine pathway; L-kynurenine from L-tryptophan: step 1/2. Heme-dependent dioxygenase that catalyzes the oxidative cleavage of the L-tryptophan (L-Trp) pyrrole ring and converts L-tryptophan to N-formyl-L-kynurenine. Catalyzes the oxidative cleavage of the indole moiety. The protein is Tryptophan 2,3-dioxygenase of Nocardioides sp. (strain ATCC BAA-499 / JS614).